The primary structure comprises 195 residues: TRVVTCDNGENVQFLICDSGVIFIERALYGRTDGTTCKEGRPANQLTNTQCSQTGTLEVLSHRCNGKQVCEVNTEVFRTSDPCVGIYKYLETTYTCLPATRSITCEGSDAPLECDEGTIQIHSANYGRRDQLVCSFNRPANQLANTNCLSQSITTSKSAERCNRKSQCDVPASNSLYGDPCVGTYKYLDVAYTCG.

SUEL-type lectin domains lie at 1–97 (TRVV…YTCL) and 104–195 (TCEG…YTCG).

Its function is as follows. L-rhamnose binding lectin. Has hemagglutinating activity towards rabbit erythrocytes and human type B erythrocytes. Hemagglutinating activity is inhibited by smooth-type lipopolysaccharide (LPS) from S.flexneri 1A and E.coli K12, but not by rough-type LPS from S.flexneri, E.coli K12 and E.coli EH100. Agglutinates E.coli K12 and B.subtilis. The chain is L-rhamnose-binding lectin CSL2 from Oncorhynchus keta (Chum salmon).